The primary structure comprises 286 residues: N-alpha-acetyltransferase 80 (286 aa).

A disordered region spans residues 33-54; that stretch reads TFNPGPTELTLDPEHQPEETPA. Residues 60 to 207 enclose the N-acetyltransferase domain; that stretch reads LTLEPVHRRP…VFTSRRLPAT (148 aa). Residues Arg85 and 90–93 each bind substrate; that span reads RLHS. Acetyl-CoA contacts are provided by residues 141 to 143, 149 to 154, and Gln179; these read VVV and GRGFGR. A disordered region spans residues 212-269; that stretch reads FPTAPSPRPPRKAPNLTAQAAPRGPKGPPLPPPPPLPECLTISPPVPSGPPSKSLLET. The span at 236–248 shows a compositional bias: pro residues; sequence PKGPPLPPPPPLP.

The protein belongs to the acetyltransferase family. Strongly expressed in heart and skeletal muscle, followed by brain and pancreas, with weak expression in kidney, liver, and lung and no expression in placenta.

It localises to the cytoplasm. It is found in the cytosol. It carries out the reaction N-terminal L-aspartyl-L-aspartyl-L-aspartyl-[protein] + acetyl-CoA = N-terminal N-acetyl-L-aspartyl-L-aspartyl-L-aspartyl-[protein] + CoA + H(+). The enzyme catalyses N-terminal L-glutamyl-L-glutamyl-L-glutamyl-[protein] + acetyl-CoA = N-terminal N-acetyl-L-glutamyl-L-glutamyl-L-glutamyl-[protein] + CoA + H(+). N-alpha-acetyltransferase that specifically mediates the acetylation of the acidic amino terminus of processed forms of beta- and gamma-actin (ACTB and ACTG, respectively). N-terminal acetylation of processed beta- and gamma-actin regulates actin filament depolymerization and elongation. In vivo, preferentially displays N-terminal acetyltransferase activity towards acid N-terminal sequences starting with Asp-Asp-Asp and Glu-Glu-Glu. In vitro, shows high activity towards Met-Asp-Glu-Leu and Met-Asp-Asp-Asp. May act as a tumor suppressor. The polypeptide is N-alpha-acetyltransferase 80 (Homo sapiens (Human)).